The following is a 291-amino-acid chain: Gamma-gliadin B (291 aa).

The signal sequence occupies residues 1–19 (MKTLLILTILAMAITIATA). Low complexity predominate over residues 38–81 (LQPHQPFSQQPQQIFPQPQQTFPHQPQQQFPQPQQPQQQFLQPR). Residues 38–137 (LQPHQPFSQQ…QSFPQQQPSL (100 aa)) form a disordered region. A compositionally biased stretch (pro residues) spans 82 to 99 (QPFPQQPQQPYPQQPQQP). Low complexity-rich tracts occupy residues 100–117 (FPQT…KQPQ) and 125–137 (QPQQ…QPSL).

Belongs to the gliadin/glutenin family.

Functionally, gliadin is the major seed storage protein in wheat. The chain is Gamma-gliadin B from Triticum aestivum (Wheat).